Reading from the N-terminus, the 630-residue chain is MAGLALRLVLAATLLGLAGSLDWKAASSLNPIEKCMEDHDYEQLLKVVTLGLNRTSKPQKVVVVGAGVAGLVAAKMLSDAGHKVTILEADNRIGGRIFTFRDEKTGWIGELGAMRMPSSHRILHKLCRTLGLNLTQFTQYDENTWTEVHNVKLRNYVVEKMPEKLGYNLNNRERGHSPEDIYQMALNKAFKDLKALGCKKAMNKFNKHTLLEYLLEEGNLSRPAVQLLGDVMSEEGFFYLSFAEALRAHACLSDRLRYSRIVGGWDLLPRALLSSLSGALLLNAPVVSITQGRNDVRVHIATSLHSEKTLTADVVLLTASGPALQRITFSPPLTRKRQEALRALHYVAASKVFLSFRRPFWHEEHIEGGHSNTDRPSRLIFYPARGEGSLLLASYTWSDAAAPFAGLSTDQTLRLVLQDVAALHGPVVFRLWDGRGVVKRWAEDPHSQGGFVVQPPLYGREAEDYDWSAPFGRIYFAGEHTALPHGWVETAVKSGLRAAVRINNNYGYGEVDPQMMEHAYAEANYLDQYPEGERPEEQQAREEVSPDEQEPSHKHLLVETSPEGQQHAFVEAIPELQGHVFVETVPQEKGHAHQNIYPSEHVQVHGEVIPEWHGHGGSGTPQMHRVGDHS.

The signal sequence occupies residues 1-21 (MAGLALRLVLAATLLGLAGSL). Residues Cys-35 and Cys-198 are joined by a disulfide bond. Asn-53 carries an N-linked (GlcNAc...) asparagine glycan. FAD contacts are provided by residues 68-69 (VA), 88-89 (EA), Arg-96, and 112-115 (GAMR). Arg-115 contacts substrate. N-linked (GlcNAc...) asparagine glycans are attached at residues Asn-133 and Asn-219. Residue Val-286 participates in FAD binding. Residue Tyr-395 coordinates substrate. Residues Glu-479 and 486-491 (GWVETA) contribute to the FAD site. 486–487 (GW) provides a ligand contact to substrate. The segment at 532–554 (GERPEEQQAREEVSPDEQEPSHK) is disordered.

Belongs to the flavin monoamine oxidase family. FIG1 subfamily. Requires FAD as cofactor. Primarily found in immune tissues. As to expression, primarily found in immune tissues, mostly in B-lymphocytes. In terms of tissue distribution, restricted to the testis, predominantly in Sertoli cells at the periphery of the ducts, and the brain, including Purkinje cells, hippocampus and mitral cells in the olfactory bulb. No isoform 2 expression in fetal tissues.

The protein resides in the secreted. Its subcellular location is the cytoplasmic vesicle. It localises to the secretory vesicle. It is found in the acrosome. The protein localises to the lysosome. The enzyme catalyses an L-alpha-amino acid + O2 + H2O = a 2-oxocarboxylate + H2O2 + NH4(+). It catalyses the reaction L-tryptophan + O2 + H2O = indole-3-pyruvate + H2O2 + NH4(+). It carries out the reaction L-phenylalanine + O2 + H2O = 3-phenylpyruvate + H2O2 + NH4(+). The catalysed reaction is L-tyrosine + O2 + H2O = 3-(4-hydroxyphenyl)pyruvate + H2O2 + NH4(+). The enzyme catalyses L-arginine + O2 + H2O = 5-guanidino-2-oxopentanoate + H2O2 + NH4(+). The protein operates within amino-acid degradation; L-tryptophan degradation via pyruvate pathway. Secreted L-amino-acid oxidase that acts as a key immunoregulator. Has preference for L-aromatic amino acids: converts phenylalanine (Phe), tyrosine (Tyr) and tryptophan (Trp) to phenylpyruvic acid (PP), hydroxyphenylpyruvic acid (HPP), and indole-3-pyruvic acid (I3P), respectively. Also has weak L-arginine oxidase activity. Acts as a negative regulator of anti-tumor immunity by mediating Trp degradation via an indole pyruvate pathway that activates the transcription factor AHR. IL4I1-mediated Trp catabolism generates I3P, giving rise to indole metabolites (indole-3-acetic acid (IAA) and indole-3-aldehyde (I3A)) and kynurenic acid, which act as ligands for AHR, a ligand-activated transcription factor that plays important roles in immunity and cancer. AHR activation by indoles following IL4I1-mediated Trp degradation enhances tumor progression by promoting cancer cell motility and suppressing adaptive immunity. Also has an immunoregulatory function in some immune cell, probably by mediating Trp degradation and promoting downstream AHR activation: inhibits T-cell activation and proliferation, promotes the differentiation of naive CD4(+) T-cells into FOXP3(+) regulatory T-cells (Treg) and regulates the development and function of B-cells. Also regulates M2 macrophage polarization by inhibiting T-cell activation. Also has antibacterial properties by inhibiting growth of Gram negative and Gram positive bacteria through the production of NH4(+) and H2O2. The chain is L-amino-acid oxidase from Mus musculus (Mouse).